We begin with the raw amino-acid sequence, 107 residues long: Translation initiation factor IF-1, chloroplastic (107 aa).

An S1-like domain is found at R8–P83. Residues R81–G107 are disordered. Over residues P83–G107 the composition is skewed to basic and acidic residues.

This sequence belongs to the IF-1 family. Component of the 30S ribosomal translation pre-initiation complex which assembles on the 30S ribosome in the order IF-2 and IF-3, IF-1 and N-formylmethionyl-tRNA(fMet); mRNA recruitment can occur at any time during PIC assembly.

The protein resides in the plastid. Its subcellular location is the chloroplast. Functionally, one of the essential components for the initiation of protein synthesis. Stabilizes the binding of IF-2 and IF-3 on the 30S subunit to which N-formylmethionyl-tRNA(fMet) subsequently binds. Helps modulate mRNA selection, yielding the 30S pre-initiation complex (PIC). Upon addition of the 50S ribosomal subunit IF-1, IF-2 and IF-3 are released leaving the mature 70S translation initiation complex. The sequence is that of Translation initiation factor IF-1, chloroplastic from Oryza sativa subsp. indica (Rice).